Consider the following 202-residue polypeptide: Protein FAR-RED ELONGATED HYPOCOTYL 1 (202 aa).

Serine 39 bears the Phosphoserine mark. Residues 40-43 (KKRK) carry the Nuclear localization sequence (NLS) motif. The Nuclear export sequence (NES) signature appears at 54–57 (LLPL). A Phosphothreonine modification is found at threonine 61.

The protein belongs to the FHY1 protein family. Homodimer and heterodimer with FHL. Interacts with underphosphorylated PHYA, especially upon far-red (FR) light illumination. Binds to LAF1 and HFR1. Forms PHYA/FHY1/HFR1 complex in darkness but dissociates from PHYA and HFR1 in response to continuous FR light (FRc). Post-translationally, inactivated by rapid reversible PHYA-mediated phosphorylation at Ser-39 and Thr-61 in red light (R), thus inhibiting PHYA signaling in a negative feedback loop; this ensures the seedling deetiolation process in response to a R-enriched light condition. Subsequent exposure to far-red light (FR) after the R conditions leads to dephosphorylation. The phosphorylated form is cytoplasmic only and unable to bind to chromatin at direct target genes whereas the unphosphorylated form can shuttle from cytoplasm to nucleus. As to expression, expressed in hypocotyl cells of etiolated plants.

It localises to the nucleus. Its subcellular location is the cytoplasm. Its function is as follows. Key regulator of far red / red (FR/R) spectrum-specific responses essential for the adaption to changing light conditions (e.g. de-etiolation), essentially by regulating PHYA shuttling from the cytoplasm to the nucleus and by directly regulating the expression of some target genes, depending on light conditions and phosphorylation status. Binds chromatin at target genes promoters, especially in FR light conditions. Can activate transcription of different genes, some being in a phytochrome A (PHYA)-dependent and other in a PHYA-independent manners. Controls specific aspects of plant development, such as the inhibition of seed germination under FR during salt stress. Essential for light-regulated PHYA nuclear accumulation and subsequent PHYA phototropic signaling processes involved in photomorphogenesis. Mediates the association of PHYA with HFR1 and LAF1 in the nucleus in response to FR conditions. PHYA-specific signal transducer in response to continuous FR lights. Contributes to inhibition of hypocotyl elongation in continuous blue light (B). This Arabidopsis thaliana (Mouse-ear cress) protein is Protein FAR-RED ELONGATED HYPOCOTYL 1.